The chain runs to 346 residues: Anthranilate phosphoribosyltransferase (346 aa).

5-phospho-alpha-D-ribose 1-diphosphate-binding positions include Gly-80, Gly-83–Asp-84, Thr-88, Asn-90–Thr-93, Lys-108–Ser-116, and Ser-120. Gly-80 contributes to the anthranilate binding site. Mg(2+) is bound at residue Ser-92. An anthranilate-binding site is contributed by Asn-111. Arg-166 lines the anthranilate pocket. 2 residues coordinate Mg(2+): Asp-225 and Glu-226.

The protein belongs to the anthranilate phosphoribosyltransferase family. As to quaternary structure, homodimer. Requires Mg(2+) as cofactor.

The enzyme catalyses N-(5-phospho-beta-D-ribosyl)anthranilate + diphosphate = 5-phospho-alpha-D-ribose 1-diphosphate + anthranilate. It participates in amino-acid biosynthesis; L-tryptophan biosynthesis; L-tryptophan from chorismate: step 2/5. Catalyzes the transfer of the phosphoribosyl group of 5-phosphorylribose-1-pyrophosphate (PRPP) to anthranilate to yield N-(5'-phosphoribosyl)-anthranilate (PRA). This Desulforudis audaxviator (strain MP104C) protein is Anthranilate phosphoribosyltransferase.